Reading from the N-terminus, the 317-residue chain is Melanocyte-stimulating hormone receptor (317 aa).

Residues 1–37 (MPVQGSQRRLLGSLNSTPTATPHLGLAANQTGAWCLE) lie on the Extracellular side of the membrane. N29 carries an N-linked (GlcNAc...) asparagine glycan. Residues 38 to 63 (VSIPDGLFLSLGLVSLVENVLVVTAI) traverse the membrane as a helical segment. The Cytoplasmic segment spans residues 64-72 (AKNRNLHSP). Residues 73–93 (MYCFICCLALSDLLVSGSNML) traverse the membrane as a helical segment. At 94 to 118 (ETAVTLLLEAGALAARAAVVQQLDN) the chain is on the extracellular side. Residues 119–140 (VIDVITCSSMLSSLCFLGAIAV) form a helical membrane-spanning segment. Residues 141–163 (DRYISIFYALRYHSIVTLPRARR) are Cytoplasmic-facing. Residues 164-183 (AVAAIWVASVLFSMLFIAYY) form a helical membrane-spanning segment. Residues 184–191 (DHAAVLLC) are Extracellular-facing. A helical membrane pass occupies residues 192 to 211 (LVVFFLAMLVLMAVLYVHML). Residues 212–240 (ARACQHAQGIARLHKRQRPAHQGFGLKGA) are Cytoplasmic-facing. The helical transmembrane segment at 241–266 (ATLTILLGIFFLCWGPFFLHLTLIVL) threads the bilayer. Residues 267–279 (CPQHPTCSCIFKN) lie on the Extracellular side of the membrane. A helical membrane pass occupies residues 280-300 (FNLFLALIICNAIIDPLIYAF). At 301–317 (RSQELRRTLKEVLLCSW) the chain is on the cytoplasmic side. The S-palmitoyl cysteine moiety is linked to residue C315.

It belongs to the G-protein coupled receptor 1 family. Interacts with MGRN1, but does not undergo MGRN1-mediated ubiquitination; this interaction competes with GNAS-binding and thus inhibits agonist-induced cAMP production. Interacts with OPN3; the interaction results in a decrease in MC1R-mediated cAMP signaling and ultimately a decrease in melanin production in melanocytes.

Its subcellular location is the cell membrane. In terms of biological role, receptor for MSH (alpha, beta and gamma) and ACTH. The activity of this receptor is mediated by G proteins which activate adenylate cyclase. Mediates melanogenesis, the production of eumelanin (black/brown) and phaeomelanin (red/yellow), via regulation of cAMP signaling in melanocytes. The protein is Melanocyte-stimulating hormone receptor (MC1R) of Allenopithecus nigroviridis (Allen's swamp monkey).